We begin with the raw amino-acid sequence, 158 residues long: Ribosome maturation factor RimP (158 aa).

It belongs to the RimP family.

Its subcellular location is the cytoplasm. Required for maturation of 30S ribosomal subunits. The chain is Ribosome maturation factor RimP from Streptococcus suis (strain 05ZYH33).